Consider the following 566-residue polypeptide: NAD-dependent malic enzyme (566 aa).

Residue Tyr-105 is the Proton donor of the active site. Residue Arg-158 participates in NAD(+) binding. The Proton acceptor role is filled by Lys-176. Residues Glu-247, Asp-248, and Asp-271 each contribute to the a divalent metal cation site. Asp-271 and Asn-419 together coordinate NAD(+).

It belongs to the malic enzymes family. As to quaternary structure, homotetramer. The cofactor is Mg(2+). Requires Mn(2+) as cofactor.

The enzyme catalyses (S)-malate + NAD(+) = pyruvate + CO2 + NADH. It carries out the reaction oxaloacetate + H(+) = pyruvate + CO2. The chain is NAD-dependent malic enzyme from Acinetobacter baylyi (strain ATCC 33305 / BD413 / ADP1).